The chain runs to 515 residues: G-protein coupled receptor 176 (515 aa).

Residues Met1–His16 show a composition bias toward polar residues. The tract at residues Met1 to Gly20 is disordered. At Met1–Gln42 the chain is on the extracellular side. Asn4, Asn11, Asn17, and Asn27 each carry an N-linked (GlcNAc...) asparagine glycan. Residues Phe43 to Leu63 traverse the membrane as a helical segment. The Cytoplasmic portion of the chain corresponds to Trp64 to Asn82. A helical membrane pass occupies residues Leu83–Thr103. Over Ser104–Lys118 the chain is Extracellular. A helical membrane pass occupies residues Val119–Ala139. At Leu140 to Arg160 the chain is on the cytoplasmic side. Residues Glu161–Thr181 form a helical membrane-spanning segment. Residues Asn182–Leu207 lie on the Extracellular side of the membrane. The helical transmembrane segment at Val208–Ile228 threads the bilayer. Residues Arg229–Thr267 are Cytoplasmic-facing. Residues Leu268–Tyr288 form a helical membrane-spanning segment. The Extracellular segment spans residues Gln289–Val299. Residues Phe300 to Phe320 traverse the membrane as a helical segment. At Leu321 to Ser515 the chain is on the cytoplasmic side.

This sequence belongs to the G-protein coupled receptor 1 family.

It localises to the cell membrane. Orphan receptor involved in normal circadian rhythm behavior. Acts through the G-protein subclass G(z)-alpha and has an agonist-independent basal activity to repress cAMP production. The protein is G-protein coupled receptor 176 (GPR176) of Homo sapiens (Human).